The sequence spans 268 residues: Putative ABC transporter ATP-binding protein LMOf2365_1216 (268 aa).

In terms of domain architecture, ABC transporter spans 2 to 237 (LKTEHISFQY…KSNVEQAGLV (236 aa)). ATP is bound at residue 35–42 (GANGSGKS).

This sequence belongs to the ABC transporter superfamily.

Its subcellular location is the cell membrane. Its function is as follows. Probably part of an ABC transporter complex. Responsible for energy coupling to the transport system. The sequence is that of Putative ABC transporter ATP-binding protein LMOf2365_1216 from Listeria monocytogenes serotype 4b (strain F2365).